The chain runs to 548 residues: Sensor protein TdiS (548 aa).

The PAS 1 domain occupies 20–89 (DPATGYEVIF…IGENYGHFFE (70 aa)). One can recognise a PAC 1 domain in the interval 94–145 (FKDERPIIRKDGSVIWCIVTGSLLDSSNPRLGSIWVVQDISEHKRTEDDLKA). Residues 185 to 256 (HREKYEKLFH…RKRLPWRIHD (72 aa)) form the PAS 2 domain. The 52-residue stretch at 263-314 (KNIEIGMREEESRKQRWLSVSSSLLELKGQKMVVAAFTDITYRKRIEELERL) folds into the PAC 2 domain. One can recognise a Histidine kinase domain in the interval 334–548 (ALAHQMGQPL…GSKFQFTLPI (215 aa)). At His337 the chain carries Phosphohistidine; by autocatalysis.

Post-translationally, autophosphorylated.

It carries out the reaction ATP + protein L-histidine = ADP + protein N-phospho-L-histidine.. In terms of biological role, member of the two-component regulatory system TdiR/TdiS, which probably regulates transcription of toluene catabolic genes (bss operon). May activate TdiR by phosphorylation. This is Sensor protein TdiS (tdiS) from Thauera aromatica.